A 103-amino-acid chain; its full sequence is Cyclotide vitri-A (103 aa).

Residues 1-9 (AAFALPAFA) form the signal peptide. A propeptide spanning residues 10–69 (SFEKDVITPAALEAVLNRKAPLSNIMMENDAIVNVIANVKTVISNPVLEEALLKTNHGVN) is cleaved from the precursor. Positions 70 to 99 (GIPCGESCVWIPCITSAIGCSCKSKVCYRN) form a cross-link, cyclopeptide (Gly-Asn). 3 cysteine pairs are disulfide-bonded: Cys-73/Cys-89, Cys-77/Cys-91, and Cys-82/Cys-96. Positions 100-103 (SLDN) are excised as a propeptide.

This is a cyclic peptide.

Functionally, probably participates in a plant defense mechanism. The sequence is that of Cyclotide vitri-A from Viola biflora (Yellow wood violet).